A 205-amino-acid chain; its full sequence is MTLYDKEINKNSLLIPMVIEKTSYGERSYDIYSRLLKERIIFLTGTIDDNTANLIVAQMLFLEAENAKQDIYIYINSPGGVITAGMSIYDTMKFIKPNVNTICIGQACSMAALILTAGKKGYRYCLPNSRIMIHQPIGGYNGQASDIEIHAKEIIKVKRKLNELMAFHTSQSINTIEKDTERDCFLSANQAIKYGLIDTILSYRT.

Ser109 functions as the Nucleophile in the catalytic mechanism. His134 is an active-site residue.

The protein belongs to the peptidase S14 family. Fourteen ClpP subunits assemble into 2 heptameric rings which stack back to back to give a disk-like structure with a central cavity, resembling the structure of eukaryotic proteasomes.

It is found in the cytoplasm. It catalyses the reaction Hydrolysis of proteins to small peptides in the presence of ATP and magnesium. alpha-casein is the usual test substrate. In the absence of ATP, only oligopeptides shorter than five residues are hydrolyzed (such as succinyl-Leu-Tyr-|-NHMec, and Leu-Tyr-Leu-|-Tyr-Trp, in which cleavage of the -Tyr-|-Leu- and -Tyr-|-Trp bonds also occurs).. Functionally, cleaves peptides in various proteins in a process that requires ATP hydrolysis. Has a chymotrypsin-like activity. Plays a major role in the degradation of misfolded proteins. This Buchnera aphidicola subsp. Baizongia pistaciae (strain Bp) protein is ATP-dependent Clp protease proteolytic subunit.